The following is a 511-amino-acid chain: MSRNPFLDPTLQEILQVIKPTRADRDTRITVIDQLRDVLQSVECLRGATVQPFGSFVSNLFTRWGDLDISVDLFSGSSILFTGKKQKQTLLGHLLRALRASGLWYKLQFVIHARVPILKVVSGHQRISCDISIDNLDGLLKSRFLFWISEIDGRFRDLVLLVKEWAKAHNINDSKTGTFNSYSLSLLVIFHFQTCVPAILPPLRVIYPKSAVDDLTGVRKTAEESIAQVTAANIARFKSERAKSVNRSSLSELLVSFFAKFSDINVKAQEFGVCPFTGRWETISSNTTWLPKTYSLFVEDPFEQPVNAARSVSRRNLDRIAQVFQITSRRLVSECNRNSIIGILTGQHIQESLYRTISLPSQHHANGMHNVRNLHGQARPQNQQMQQNWSQSYNTPNPPHWPPLTQSRPQQNWTQNNPRNLQGQPPVQGQTWPVITQTQTQQKSPYKSGNRPLKNTSAGSSQNQGHIGKPSGHMNGVNSARPAYTNGVNSARPPSKIPSQGGQIWRPRHEQ.

The interval 378-511 is disordered; the sequence is ARPQNQQMQQ…GQIWRPRHEQ (134 aa). The segment covering 381 to 392 has biased composition (low complexity); that stretch reads QNQQMQQNWSQS. The span at 404–465 shows a compositional bias: polar residues; sequence LTQSRPQQNW…TSAGSSQNQG (62 aa).

It belongs to the DNA polymerase type-B-like family.

The protein localises to the cytoplasm. It localises to the P-body. It is found in the nucleus. The enzyme catalyses RNA(n) + UTP = RNA(n)-3'-uridine ribonucleotide + diphosphate. Its activity is regulated as follows. Completely inhibited by 2'-O-methylation on the substrate RNA. Its function is as follows. Uridylates small RNAs to trigger their degradation. Catalyzes the uridylation of 5' fragments produced by AGO1-mediated cleavage of miRNA target RNAs. Acts synergistically with URT1 in unmethylated miRNA uridylation, leading to their degradation. URT1 and HESO1 prefer substrates with different 3' end nucleotides and act cooperatively to tail different forms of the same miRNAs. URT1 and HESO1 act sequentially, with URT1 mono-uridylating the miRNAs followed by their further uridylation by HESO1. URT1 and HESO1 are involved in the uridylation and clearance of RISC-generated 5' mRNA fragments. Able to act on AGO1-bound miRNAs and the uridylated species stay associated with AGO1. This is Protein HESO1 from Arabidopsis thaliana (Mouse-ear cress).